We begin with the raw amino-acid sequence, 246 residues long: Ribonuclease 3 (246 aa).

An RNase III domain is found at 20–145 (FSKLEKILGF…FVGAIYLDRG (126 aa)). E62 is a Mg(2+) binding site. D66 is an active-site residue. N131 and E134 together coordinate Mg(2+). E134 is an active-site residue. The DRBM domain maps to 173-241 (SYKSLLIEWC…SKRGYFVFQS (69 aa)).

Belongs to the ribonuclease III family. As to quaternary structure, homodimer. Mg(2+) serves as cofactor.

It localises to the cytoplasm. It carries out the reaction Endonucleolytic cleavage to 5'-phosphomonoester.. Functionally, digests double-stranded RNA. Involved in the processing of primary rRNA transcript to yield the immediate precursors to the large and small rRNAs (23S and 16S). Processes some mRNAs, and tRNAs when they are encoded in the rRNA operon. Processes pre-crRNA and tracrRNA of type II CRISPR loci if present in the organism. The sequence is that of Ribonuclease 3 from Flavobacterium psychrophilum (strain ATCC 49511 / DSM 21280 / CIP 103535 / JIP02/86).